Here is a 412-residue protein sequence, read N- to C-terminus: UPF0761 membrane protein LPC_2650 (412 aa).

6 consecutive transmembrane segments (helical) span residues 36-56 (ALAF…LAIF), 99-119 (LSIW…FTIE), 137-157 (AFLL…LSLA), 177-197 (ILHY…YVVV), 210-230 (GGLV…YYLI), and 241-261 (AFAT…ITLL).

It belongs to the UPF0761 family.

It is found in the cell inner membrane. This is UPF0761 membrane protein LPC_2650 from Legionella pneumophila (strain Corby).